Here is a 309-residue protein sequence, read N- to C-terminus: Olfactory receptor 6C4 (309 aa).

Topologically, residues 1–23 (MKNRTMFGEFILLGLTNQPELQV) are extracellular. Residue Asn-3 is glycosylated (N-linked (GlcNAc...) asparagine). The chain crosses the membrane as a helical span at residues 24–44 (MIFIFLFLTYMLSILGNLTII). At 45-52 (TLTLLDPH) the chain is on the cytoplasmic side. A helical transmembrane segment spans residues 53 to 73 (LQTPMYFFLRNFSFLEISFTS). At 74 to 97 (IFIPRFLTSMTTGNKVISFAGCLT) the chain is on the extracellular side. A disulfide bridge links Cys-95 with Cys-187. The chain crosses the membrane as a helical span at residues 98–118 (QYFFAIFLGATEFYLLASMSY). Over 119-137 (DRYVAICKPLHYLTIMSSR) the chain is Cytoplasmic. A helical membrane pass occupies residues 138–158 (VCIQLVFCSWLGGFLAILPPI). Residues 159–195 (ILMTQVDFCVSNILNHYYCDYGPLVELACSDTSLLEL) lie on the Extracellular side of the membrane. Residues 196–215 (MVILLAVVTLMVTLVLVTLS) traverse the membrane as a helical segment. Topologically, residues 216-235 (YTYIIRTILRIPSAQQRTKA) are cytoplasmic. A helical membrane pass occupies residues 236–256 (FSTCSSHMIVISLSYGSCMFM). Residues 257-269 (YINPSAKEGGAFN) lie on the Extracellular side of the membrane. The chain crosses the membrane as a helical span at residues 270 to 290 (KGIAVLITSVTPLLNPFIYTL). The Cytoplasmic portion of the chain corresponds to 291–309 (RNQQVKQAFKDSVKKIVKL).

The protein belongs to the G-protein coupled receptor 1 family.

It is found in the cell membrane. In terms of biological role, odorant receptor. The chain is Olfactory receptor 6C4 (OR6C4) from Homo sapiens (Human).